The sequence spans 297 residues: Zinc finger protein 784 (297 aa).

The segment covering 1–12 (MAAARPDPPIPS) has biased composition (pro residues). A disordered region spans residues 1 to 39 (MAAARPDPPIPSSPTRESPSPEPPDLVLVPDGRPVTPPG). Ser-13 is subject to Phosphoserine. C2H2-type zinc fingers lie at residues 64-86 (FHCALCPAAFRLVSELLFHEHGH), 100-122 (SRCHVCGHSCPGPASLRAHYSLH), and 128-150 (YRCSLCPRAFKALAPLLRHQHRH). Residues 149–175 (RHGVEPGTSERLLPTTTTGQPNSRVAQ) are disordered. A compositionally biased stretch (polar residues) spans 162-173 (PTTTTGQPNSRV). C2H2-type zinc fingers lie at residues 195 to 217 (FACRFCAKPFRRSSDMRDHERVH), 223 to 245 (YHCSICGKGFTQSSVLSGHARIH), and 251 to 273 (FRCMLCDRTFNNSSNFRKHQRTH). Positions 268–297 (KHQRTHFHGPGSGVGESRGQLRSSSVSQES) are disordered. A compositionally biased stretch (polar residues) spans 287-297 (QLRSSSVSQES).

It belongs to the krueppel C2H2-type zinc-finger protein family.

The protein resides in the nucleus. May be involved in transcriptional regulation. The sequence is that of Zinc finger protein 784 (Znf784) from Mus musculus (Mouse).